Here is a 177-residue protein sequence, read N- to C-terminus: Embryogenesis-like protein (177 aa).

A coiled-coil region spans residues 98 to 118; the sequence is VDEINLKFAEAREEIEMAMDA.

As to quaternary structure, interacts with HAG1/GCN5. In terms of tissue distribution, expressed in flowers, leaves, stems and siliques.

It is found in the nucleus. In terms of biological role, activates gene expression by recruiting HAG1/GCN5 and triggering subsequent histone H3 acetylation of target genes promoters. This is Embryogenesis-like protein from Arabidopsis thaliana (Mouse-ear cress).